The following is a 514-amino-acid chain: 3-octaprenyl-4-hydroxybenzoate carboxy-lyase (514 aa).

N177 is a binding site for Mn(2+). Prenylated FMN contacts are provided by residues 180 to 182 (IYR), 194 to 196 (RWL), and 199 to 200 (RG). E243 contributes to the Mn(2+) binding site. D314 acts as the Proton donor in catalysis.

Belongs to the UbiD family. As to quaternary structure, homohexamer. Prenylated FMN is required as a cofactor. Requires Mn(2+) as cofactor.

It is found in the cell membrane. It catalyses the reaction a 4-hydroxy-3-(all-trans-polyprenyl)benzoate + H(+) = a 2-(all-trans-polyprenyl)phenol + CO2. It functions in the pathway cofactor biosynthesis; ubiquinone biosynthesis. Its function is as follows. Catalyzes the decarboxylation of 3-octaprenyl-4-hydroxy benzoate to 2-octaprenylphenol, an intermediate step in ubiquinone biosynthesis. The sequence is that of 3-octaprenyl-4-hydroxybenzoate carboxy-lyase from Bordetella pertussis (strain Tohama I / ATCC BAA-589 / NCTC 13251).